The sequence spans 52 residues: LDPKCTLPLETGICRAELHRFGYDTKLKECTQFVYGGCHHNENNFKKLEVCR.

The BPTI/Kunitz inhibitor domain occupies Cys5–Arg52. 2 disulfide bridges follow: Cys14–Cys38 and Cys30–Cys51.

In terms of biological role, inhibits trypsin and the toxin protease PR2 of M.anisopliae. Does not inhibit chymotrypsin, subtilisin Carlsberg, proteinase K, porcine pancreatic elastase and the toxin protease PR1 of M.anisopliae. This Galleria mellonella (Greater wax moth) protein is Inducible serine protease inhibitor 2.